Here is a 401-residue protein sequence, read N- to C-terminus: Imidazolonepropionase (401 aa).

H70 and H72 together coordinate Fe(3+). 2 residues coordinate Zn(2+): H70 and H72. Positions 79, 142, and 175 each coordinate 4-imidazolone-5-propanoate. Y142 contacts N-formimidoyl-L-glutamate. H238 provides a ligand contact to Fe(3+). Residue H238 participates in Zn(2+) binding. Q241 serves as a coordination point for 4-imidazolone-5-propanoate. D313 is a binding site for Fe(3+). D313 is a binding site for Zn(2+). 2 residues coordinate N-formimidoyl-L-glutamate: N315 and G317. T318 serves as a coordination point for 4-imidazolone-5-propanoate.

The protein belongs to the metallo-dependent hydrolases superfamily. HutI family. It depends on Zn(2+) as a cofactor. Requires Fe(3+) as cofactor.

Its subcellular location is the cytoplasm. It carries out the reaction 4-imidazolone-5-propanoate + H2O = N-formimidoyl-L-glutamate. Its pathway is amino-acid degradation; L-histidine degradation into L-glutamate; N-formimidoyl-L-glutamate from L-histidine: step 3/3. Its function is as follows. Catalyzes the hydrolytic cleavage of the carbon-nitrogen bond in imidazolone-5-propanoate to yield N-formimidoyl-L-glutamate. It is the third step in the universal histidine degradation pathway. This Xanthomonas axonopodis pv. citri (strain 306) protein is Imidazolonepropionase.